The following is a 199-amino-acid chain: Probable GTP-binding protein EngB (199 aa).

Residues 28–199 (DLPEIALAGR…DSWDAILEQV (172 aa)) form the EngB-type G domain. Residues 36-43 (GRSNVGKS), 63-67 (GKTQL), 81-84 (DVPG), 148-151 (TKAD), and 180-182 (FSS) contribute to the GTP site. Residues S43 and T65 each contribute to the Mg(2+) site.

This sequence belongs to the TRAFAC class TrmE-Era-EngA-EngB-Septin-like GTPase superfamily. EngB GTPase family. Mg(2+) serves as cofactor.

Necessary for normal cell division and for the maintenance of normal septation. The chain is Probable GTP-binding protein EngB from Streptococcus pyogenes serotype M3 (strain SSI-1).